The primary structure comprises 98 residues: Small ribosomal subunit protein uS19 (98 aa).

A disordered region spans residues 74 to 98 (FAPTRNYRGHAGGKSEKGGSAPRKK).

The protein belongs to the universal ribosomal protein uS19 family.

Its function is as follows. Protein S19 forms a complex with S13 that binds strongly to the 16S ribosomal RNA. This is Small ribosomal subunit protein uS19 from Chlorobium chlorochromatii (strain CaD3).